A 668-amino-acid polypeptide reads, in one-letter code: UvrABC system protein C (668 aa).

Residues Asp14–Ile91 enclose the GIY-YIG domain. Residues Lys196–Leu231 form the UVR domain.

It belongs to the UvrC family. In terms of assembly, interacts with UvrB in an incision complex.

The protein resides in the cytoplasm. In terms of biological role, the UvrABC repair system catalyzes the recognition and processing of DNA lesions. UvrC both incises the 5' and 3' sides of the lesion. The N-terminal half is responsible for the 3' incision and the C-terminal half is responsible for the 5' incision. In Lactococcus lactis subsp. lactis (strain IL1403) (Streptococcus lactis), this protein is UvrABC system protein C.